Reading from the N-terminus, the 445-residue chain is Exodeoxyribonuclease 7 large subunit (445 aa).

The protein belongs to the XseA family. In terms of assembly, heterooligomer composed of large and small subunits.

The protein localises to the cytoplasm. The enzyme catalyses Exonucleolytic cleavage in either 5'- to 3'- or 3'- to 5'-direction to yield nucleoside 5'-phosphates.. Functionally, bidirectionally degrades single-stranded DNA into large acid-insoluble oligonucleotides, which are then degraded further into small acid-soluble oligonucleotides. The sequence is that of Exodeoxyribonuclease 7 large subunit from Staphylococcus saprophyticus subsp. saprophyticus (strain ATCC 15305 / DSM 20229 / NCIMB 8711 / NCTC 7292 / S-41).